The sequence spans 282 residues: Mitochondrial outer membrane protein porin (282 aa).

Belongs to the eukaryotic mitochondrial porin family.

Its subcellular location is the mitochondrion outer membrane. Its function is as follows. Forms a channel through the cell membrane that allows diffusion of small hydrophilic molecules. The channel adopts an open conformation at low or zero membrane potential and a closed conformation at potentials above 30-40 mV. The open state has a weak anion selectivity whereas the closed state is cation-selective. This Candida albicans (strain SC5314 / ATCC MYA-2876) (Yeast) protein is Mitochondrial outer membrane protein porin (POR1).